A 267-amino-acid chain; its full sequence is Large ribosomal subunit protein uL3 (267 aa).

The tract at residues 124–147 is disordered; sequence NQHIGPKSHGGGGGSQPVRQTGSL.

This sequence belongs to the universal ribosomal protein uL3 family. In terms of assembly, part of the 50S ribosomal subunit. Forms a cluster with proteins L14 and L19.

In terms of biological role, one of the primary rRNA binding proteins, it binds directly near the 3'-end of the 23S rRNA, where it nucleates assembly of the 50S subunit. This Mycoplasmopsis agalactiae (strain NCTC 10123 / CIP 59.7 / PG2) (Mycoplasma agalactiae) protein is Large ribosomal subunit protein uL3.